A 476-amino-acid chain; its full sequence is FAD-dependent monooxygenase prhF (476 aa).

Residues glutamate 41, glycine 55, and arginine 114 each contribute to the FAD site. Tyrosine 222 is an active-site residue. FAD contacts are provided by aspartate 314 and alanine 327. Asparagine 343 is a glycosylation site (N-linked (GlcNAc...) asparagine). Residues leucine 447–tyrosine 467 form a helical membrane-spanning segment. Residue asparagine 471 is glycosylated (N-linked (GlcNAc...) asparagine).

This sequence belongs to the paxM FAD-dependent monooxygenase family. Requires FAD as cofactor.

It is found in the membrane. The protein operates within secondary metabolite biosynthesis; terpenoid biosynthesis. FAD-dependent monooxygenase; part of the gene cluster that mediates the biosynthesis of paraherquonin, a meroterpenoid with a unique, highly congested hexacyclic molecular architecture. The first step of the pathway is the synthesis of 3,5-dimethylorsellinic acid (DMOA) by the polyketide synthase prhL. Synthesis of DMOA is followed by farnesylation by the prenyltransferase prhE, methylesterification by the methyl-transferase prhM, epoxidation of the prenyl chain by the flavin-dependent monooxygenase prhF, and cyclization of the farnesyl moiety by the terpene cyclase prhH, to yield the tetracyclic intermediate, protoaustinoid A. The short chain dehydrogenase prhI then oxidizes the C-3 alcohol group of the terpene cyclase product to transform protoaustinoid A into protoaustinoid B. The FAD-binding monooxygenase prhJ catalyzes the oxidation of protoaustinoid B into preaustinoid A which is further oxidized into preaustinoid A1 by FAD-binding monooxygenase phrK. Finally, prhA leads to berkeleydione via the berkeleyone B intermediate. PrhA is a multifunctional dioxygenase that first desaturates at C5-C6 to form berkeleyone B, followed by rearrangement of the A/B-ring to form the cycloheptadiene moiety in berkeleydione. Berkeleydione serves as the key intermediate for the biosynthesis of paraherquonin as well as many other meroterpenoids. The cytochrome P450 monooxygenases prhB, prhD, and prhN, as well as the isomerase prhC, are probably involved in the late stage of paraherquonin biosynthesis, after the production of berkeleydione. Especially prhC might be a multifunctional enzyme that catalyzes the D-ring expansion via intramolecular methoxy rearrangement, as well as the hydrolysis of the expanded D-ring. The chain is FAD-dependent monooxygenase prhF from Penicillium brasilianum.